The primary structure comprises 93 residues: MASGQQERSQLDRKAREGETVVPGGTGGKSLEAQQNLAEGRSRGGQTRREQMGQEGYSEMGRKGGLSSNDESGGERAAREGIDIDESKFKTKS.

Residues 1-93 form a disordered region; that stretch reads MASGQQERSQ…IDESKFKTKS (93 aa). Basic and acidic residues-rich tracts occupy residues 9–19 and 73–93; these read SQLDRKAREGE and GGERAAREGIDIDESKFKTKS.

It belongs to the small hydrophilic plant seed protein family. As to expression, embryos and young seedlings.

Its function is as follows. Lea proteins are late embryonic proteins abundant in higher plant seed embryos. It may have a role in desiccation tolerance by acting as an osmoprotective protein or as a desiccation-damage repair protein. This is Late embryogenesis abundant protein B19.1A (B19.1A) from Hordeum vulgare (Barley).